A 128-amino-acid chain; its full sequence is Cystatin-1 (128 aa).

The N-terminal stretch at 1-17 (MIRSAVVLTVLVGVCLA) is a signal peptide. Residues 20-128 (GFVGGWSQVD…TKEVTSFECN (109 aa)) enclose the Cystatin domain. 2 disulfides stabilise this stretch: cysteine 84/cysteine 96 and cysteine 107/cysteine 127.

Belongs to the cystatin family. As to expression, mainly expressed in gut.

It is found in the secreted. Inhibitor of cysteine proteinases. Strongly inhibits mammalian cathepsin B and H, and moderately inhibits mammalian cathepsin C. Also inhibits endogenous cathepsin B-like but not cathepsin C-like proteinases. May have a protective role against undesired digestion of a stored blood meal by endogenous peptidases. The sequence is that of Cystatin-1 from Ornithodoros moubata (Soft tick).